The sequence spans 309 residues: Ornithine carbamoyltransferase (309 aa).

Carbamoyl phosphate-binding positions include 56 to 59, Gln-83, Arg-107, and 134 to 137; these read STRT and HPCQ. Residues Asn-165, Asp-223, and 227–228 each bind L-ornithine; that span reads SM. Carbamoyl phosphate contacts are provided by residues 263-264 and Arg-291; that span reads CL.

It belongs to the aspartate/ornithine carbamoyltransferase superfamily. OTCase family.

The protein resides in the cytoplasm. It catalyses the reaction carbamoyl phosphate + L-ornithine = L-citrulline + phosphate + H(+). It functions in the pathway amino-acid biosynthesis; L-arginine biosynthesis; L-arginine from L-ornithine and carbamoyl phosphate: step 1/3. In terms of biological role, reversibly catalyzes the transfer of the carbamoyl group from carbamoyl phosphate (CP) to the N(epsilon) atom of ornithine (ORN) to produce L-citrulline. The protein is Ornithine carbamoyltransferase of Burkholderia cenocepacia (strain HI2424).